The following is a 746-amino-acid chain: UvrABC system protein C (746 aa).

Residues 18–97 (AKPGVYKWRD…IKEFDPRFNV (80 aa)) enclose the GIY-YIG domain. One can recognise a UVR domain in the interval 211 to 246 (RPYIAQLTRDMKEASAELEFEKAARLRDQIQMLETV). Positions 557-577 (ANGNDNGEGGSDISGKGHAVP) are disordered.

The protein belongs to the UvrC family. In terms of assembly, interacts with UvrB in an incision complex.

It is found in the cytoplasm. In terms of biological role, the UvrABC repair system catalyzes the recognition and processing of DNA lesions. UvrC both incises the 5' and 3' sides of the lesion. The N-terminal half is responsible for the 3' incision and the C-terminal half is responsible for the 5' incision. In Bifidobacterium longum (strain NCC 2705), this protein is UvrABC system protein C.